Reading from the N-terminus, the 185-residue chain is Elongation factor P (185 aa).

The protein belongs to the elongation factor P family.

It localises to the cytoplasm. The protein operates within protein biosynthesis; polypeptide chain elongation. Its function is as follows. Involved in peptide bond synthesis. Stimulates efficient translation and peptide-bond synthesis on native or reconstituted 70S ribosomes in vitro. Probably functions indirectly by altering the affinity of the ribosome for aminoacyl-tRNA, thus increasing their reactivity as acceptors for peptidyl transferase. The sequence is that of Elongation factor P from Clostridium novyi (strain NT).